A 483-amino-acid chain; its full sequence is Probable cytosol aminopeptidase (483 aa).

Mn(2+) contacts are provided by lysine 252 and aspartate 257. The active site involves lysine 264. Residues aspartate 275, aspartate 334, and glutamate 336 each coordinate Mn(2+). Arginine 338 is an active-site residue.

Belongs to the peptidase M17 family. Mn(2+) serves as cofactor.

It localises to the cytoplasm. It catalyses the reaction Release of an N-terminal amino acid, Xaa-|-Yaa-, in which Xaa is preferably Leu, but may be other amino acids including Pro although not Arg or Lys, and Yaa may be Pro. Amino acid amides and methyl esters are also readily hydrolyzed, but rates on arylamides are exceedingly low.. It carries out the reaction Release of an N-terminal amino acid, preferentially leucine, but not glutamic or aspartic acids.. Its function is as follows. Presumably involved in the processing and regular turnover of intracellular proteins. Catalyzes the removal of unsubstituted N-terminal amino acids from various peptides. In Legionella pneumophila (strain Corby), this protein is Probable cytosol aminopeptidase.